A 194-amino-acid polypeptide reads, in one-letter code: Large ribosomal subunit protein eL15 (194 aa).

The tract at residues 164-194 (SAGKKGRGLRNKGKGAEKIRPSIRANEGKGK) is disordered. Residues 167–176 (KKGRGLRNKG) are compositionally biased toward basic residues. Over residues 177–194 (KGAEKIRPSIRANEGKGK) the composition is skewed to basic and acidic residues.

The protein belongs to the eukaryotic ribosomal protein eL15 family.

The chain is Large ribosomal subunit protein eL15 (rpl15e) from Pyrococcus abyssi (strain GE5 / Orsay).